Consider the following 460-residue polypeptide: GTPase Der (460 aa).

EngA-type G domains follow at residues 2-164 (QSII…HEEF) and 196-368 (IRVG…ENFT). Residues 8–15 (GKPNVGKS), 55–59 (DSGGL), 116–119 (NKVD), 202–209 (GRVNVGKS), 249–253 (DTAGI), and 313–316 (NKWD) each bind GTP. Residues 369-453 (QKIQTSKLNT…PLVIASRKKG (85 aa)) enclose the KH-like domain.

The protein belongs to the TRAFAC class TrmE-Era-EngA-EngB-Septin-like GTPase superfamily. EngA (Der) GTPase family. Associates with the 50S ribosomal subunit.

In terms of biological role, GTPase that plays an essential role in the late steps of ribosome biogenesis. In Campylobacter jejuni subsp. jejuni serotype O:2 (strain ATCC 700819 / NCTC 11168), this protein is GTPase Der.